A 166-amino-acid polypeptide reads, in one-letter code: NAD(P)H-quinone oxidoreductase subunit I, chloroplastic (166 aa).

2 consecutive 4Fe-4S ferredoxin-type domains span residues 55-84 (GRIH…VDWK) and 95-124 (LNYS…MTEE). Residues cysteine 64, cysteine 67, cysteine 70, cysteine 74, cysteine 104, cysteine 107, cysteine 110, and cysteine 114 each coordinate [4Fe-4S] cluster.

It belongs to the complex I 23 kDa subunit family. NDH is composed of at least 16 different subunits, 5 of which are encoded in the nucleus. The cofactor is [4Fe-4S] cluster.

It localises to the plastid. The protein localises to the chloroplast thylakoid membrane. The enzyme catalyses a plastoquinone + NADH + (n+1) H(+)(in) = a plastoquinol + NAD(+) + n H(+)(out). It catalyses the reaction a plastoquinone + NADPH + (n+1) H(+)(in) = a plastoquinol + NADP(+) + n H(+)(out). In terms of biological role, NDH shuttles electrons from NAD(P)H:plastoquinone, via FMN and iron-sulfur (Fe-S) centers, to quinones in the photosynthetic chain and possibly in a chloroplast respiratory chain. The immediate electron acceptor for the enzyme in this species is believed to be plastoquinone. Couples the redox reaction to proton translocation, and thus conserves the redox energy in a proton gradient. The polypeptide is NAD(P)H-quinone oxidoreductase subunit I, chloroplastic (Chamaechaenactis scaposa (Fullstem)).